We begin with the raw amino-acid sequence, 251 residues long: Mast cell protease 3 (251 aa).

A signal peptide spans 1 to 17; sequence MVLFLLLVALLSPAGEA. Residues 18-19 constitute a propeptide, activation peptide; it reads GK. The region spanning 20–243 is the Peptidase S1 domain; sequence IIGGHEAKPH…FLSWIQRTMR (224 aa). C48 and C64 are joined by a disulfide. The active-site Charge relay system is the H63. A glycan (N-linked (GlcNAc...) asparagine) is linked at N70. The active-site Charge relay system is D107. Disulfide bonds link C141/C207 and C172/C186. The active-site Charge relay system is S201.

Belongs to the peptidase S1 family. Granzyme subfamily.

The protein localises to the secreted. It localises to the cytoplasmic granule. The chain is Mast cell protease 3 from Ovis aries (Sheep).